Here is a 152-residue protein sequence, read N- to C-terminus: Xanthine-guanine phosphoribosyltransferase (152 aa).

5-phospho-alpha-D-ribose 1-diphosphate contacts are provided by residues 37-38 (RG), Arg-69, and 88-96 (DDLVDTGGT). Arg-69 lines the GMP pocket. Residue Asp-89 coordinates Mg(2+). Residues Asp-92 and Ile-135 each contribute to the guanine site. Xanthine is bound by residues Asp-92 and Ile-135. Residues 92-96 (DTGGT) and 134-135 (WI) each bind GMP.

Belongs to the purine/pyrimidine phosphoribosyltransferase family. XGPT subfamily. In terms of assembly, homotetramer. It depends on Mg(2+) as a cofactor.

Its subcellular location is the cell inner membrane. It catalyses the reaction GMP + diphosphate = guanine + 5-phospho-alpha-D-ribose 1-diphosphate. The catalysed reaction is XMP + diphosphate = xanthine + 5-phospho-alpha-D-ribose 1-diphosphate. It carries out the reaction IMP + diphosphate = hypoxanthine + 5-phospho-alpha-D-ribose 1-diphosphate. It functions in the pathway purine metabolism; GMP biosynthesis via salvage pathway; GMP from guanine: step 1/1. It participates in purine metabolism; XMP biosynthesis via salvage pathway; XMP from xanthine: step 1/1. In terms of biological role, purine salvage pathway enzyme that catalyzes the transfer of the ribosyl-5-phosphate group from 5-phospho-alpha-D-ribose 1-diphosphate (PRPP) to the N9 position of the 6-oxopurines guanine and xanthine to form the corresponding ribonucleotides GMP (guanosine 5'-monophosphate) and XMP (xanthosine 5'-monophosphate), with the release of PPi. To a lesser extent, also acts on hypoxanthine. In Serratia proteamaculans (strain 568), this protein is Xanthine-guanine phosphoribosyltransferase.